Here is a 352-residue protein sequence, read N- to C-terminus: MSTDSDAETVDLADGVDHQVAMVMDLNKCIGCQTCTVACKSLWTEGGGRDYMYWNNVETKPGKGYPRNWEESGGGWKSSEHKERKPGQIPDKEDYGDAWEFNHEEIMYNGSDRPLRPDSDPEWGPNWDEDQGTGEYPNSYYFYLPRICNHCTHPSCVEACPRKAIYKREEDGIVLIDQERCRGYRYCVEGCPYKKVYYNATQKTSEKCIFCYPRIEGEGPDGKTFAPACAEDCPPQLRLVGFLDDEQGPIHKLVEEYEVALPLHPEYQTQPNVYYIPPFAPPQHSEDGESVDVDRIPRNYLEELFGERVHDALDTIEREREKVNRGGGSELLDMLTDTNPARKFRLEVFDDD.

The region spanning 20-48 is the 4Fe-4S ferredoxin-type 1 domain; sequence VAMVMDLNKCIGCQTCTVACKSLWTEGGG. Cys29, Cys32, Cys35, and Cys39 together coordinate [4Fe-4S] cluster. 2 disordered regions span residues 63–95 and 111–131; these read KGYP…KEDY and SDRP…DEDQ. The span at 78–95 shows a compositional bias: basic and acidic residues; that stretch reads SSEHKERKPGQIPDKEDY. 2 4Fe-4S ferredoxin-type domains span residues 139-170 and 172-201; these read SYYF…KREE and GIVL…YNAT. Positions 148, 151, and 156 each coordinate [4Fe-4S] cluster. [3Fe-4S] cluster-binding residues include Cys160, Cys181, and Cys187. [4Fe-4S] cluster-binding residues include Cys191, Cys208, Cys211, Cys229, and Cys233.

Probable multiprotein complex; a catalytic heterodimer of an alpha and beta chain is proposed to associate with additional subunits involved in membrane attachment and electron transfer. Requires [4Fe-4S] cluster as cofactor. [3Fe-4S] cluster serves as cofactor.

It is found in the cell membrane. It catalyses the reaction nitrate + a quinol = a quinone + nitrite + H2O. Inhibited by cyanide, azide and antimycin A. Enzyme stability is not dependent on salt concentration. Functionally, the respiratory membrane-bound nitrate reductase enzyme complex plays a role in generation of metabolic energy by using nitrate as a terminal electron acceptor during anaerobic conditions. The beta chain is an electron transfer unit containing four cysteine clusters involved in the formation of iron-sulfur centers. This chain is Respiratory nitrate reductase subunit beta (narH), found in Haloferax mediterranei (strain ATCC 33500 / DSM 1411 / JCM 8866 / NBRC 14739 / NCIMB 2177 / R-4) (Halobacterium mediterranei).